A 201-amino-acid polypeptide reads, in one-letter code: 3-isopropylmalate dehydratase small subunit (201 aa).

It belongs to the LeuD family. LeuD type 1 subfamily. As to quaternary structure, heterodimer of LeuC and LeuD.

It catalyses the reaction (2R,3S)-3-isopropylmalate = (2S)-2-isopropylmalate. It functions in the pathway amino-acid biosynthesis; L-leucine biosynthesis; L-leucine from 3-methyl-2-oxobutanoate: step 2/4. Functionally, catalyzes the isomerization between 2-isopropylmalate and 3-isopropylmalate, via the formation of 2-isopropylmaleate. This is 3-isopropylmalate dehydratase small subunit from Chloroflexus aurantiacus (strain ATCC 29366 / DSM 635 / J-10-fl).